A 4074-amino-acid chain; its full sequence is Fibrocystin (4074 aa).

The signal sequence occupies residues 1-22 (MIVWLISLMSIEILLLAGPALS). Residues Asn54 and Asn224 are each glycosylated (N-linked (GlcNAc...) asparagine). The 53-residue stretch at 258 to 310 (EILSVFPETGSLGGKTDIIITGDFFDNPALVTIAGVPCDIRHMSPRKIECTTR) folds into the IPT/TIG 1 domain. The PA14 domain maps to 323 to 483 (AGNRGLLFEV…TWLNPDVVST (161 aa)). N-linked (GlcNAc...) asparagine glycans are attached at residues Asn355, Asn385, Asn518, Asn527, Asn640, Asn710, Asn741, Asn822, Asn829, Asn868, Asn953, Asn966, Asn976, Asn1006, Asn1059, Asn1083, Asn1115, Asn1134, Asn1233, Asn1240, Asn1274, Asn1284, Asn1308, Asn1319, Asn1342, Asn1373, Asn1445, Asn1456, Asn1471, Asn1490, Asn1528, Asn1560, Asn1578, Asn1598, Asn1627, Asn1694, Asn1760, Asn1775, Asn1789, Asn1875, Asn1915, Asn1941, Asn1955, Asn2030, Asn2111, and Asn2140. One can recognise an IPT/TIG 2 domain in the interval 944-1000 (SLLIYIFGINFSGDPQALEIMVNKTNCKVIFSNQTNVICQTDLLPVGMHRLFMVVRP). IPT/TIG domains follow at residues 1018–1101 (PRLD…AFTY), 1107–1186 (PVIT…RSPG), and 1199–1274 (SIEP…WAGN). One can recognise an IPT/TIG 6 domain in the interval 1385 to 1464 (PWIMAISPTH…LNVTVIVNGL (80 aa)). Residues 1573 to 1641 (HYFPKNFSIH…LVIEVDGLSY (69 aa)) form the IPT/TIG 7 domain. The region spanning 1928 to 2049 (HSWFPERVPQ…PEVTFTHLQA (122 aa)) is the G8 1 domain. PbH1 repeat units lie at residues 2245–2267 (TLGL…LVGT), 2288–2322 (EQGN…YILN), 2351–2373 (APLL…FIYP), 2383–2404 (RGPT…RISR), and 2405–2427 (SSNL…DILE). N-linked (GlcNAc...) asparagine glycosylation occurs at Asn2390. N-linked (GlcNAc...) asparagine glycosylation is found at Asn2431, Asn2467, Asn2531, Asn2549, Asn2579, Asn2591, Asn2749, Asn2764, Asn2972, and Asn3004. Residues 2460-2483 (RWELIISNTTFVNFDLTDCVSIRT) form a PbH1 6 repeat. In terms of domain architecture, G8 2 spans 2743 to 2869 (EGWGGHNHTI…PKKSWTRLAA (127 aa)). One copy of the PbH1 7 repeat lies at 3029–3051 (SHGIILNDNIVFGTVGHGIDLEG). An N-linked (GlcNAc...) asparagine glycan is attached at Asn3053. The stretch at 3082–3104 (AKDINLYGNVVAGSERIGFHIQG) is one PbH1 8 repeat. Residues Asn3136, Asn3165, Asn3221, Asn3484, Asn3702, Asn3721, and Asn3833 are each glycosylated (N-linked (GlcNAc...) asparagine). One copy of the PbH1 9 repeat lies at 3158–3183 (ENSVEIENITLVDNSIGLLATVYVSS). Residues 3854-3874 (IILAVSLCSVASWLALCCLVC) traverse the membrane as a helical segment. A ciliary targeting sequence (CST) region spans residues 3871–3888 (CLVCCWFRKSKSRKIKSE). 3 disordered regions span residues 3896 to 3919 (NDQK…KEDT), 3943 to 3965 (NGVS…REED), and 4031 to 4074 (LQGQ…QEQL). Composition is skewed to basic and acidic residues over residues 3910-3919 (RSQETKKEDT) and 3954-3965 (AVREEGSSREED). The tract at residues 3947-3976 (RRKVSRRAVREEGSSREEDVVPAPRIISIT) is nuclear localization signal (NLS).

Interacts with CAMLG. Interacts with PKD2. Interacts (via CST) with ARF4; this interaction allows an efficient PKHD1 trafficking to the cilium. Interacts (via CST) with RAB8A; this interaction controls trafficking through the endomembrane systeme and to the cilium. Interacts (via CST) with TULP3; this interaction allows PKHD1 trafficking to the cilium. Post-translationally, palmitoylated. Palmitoylation facilitates the trafficking to the cilia and membrane targeting. N-glycosylated. In terms of processing, several proteolytic cleavages occur within the extracellular domain, whereas at least one cleavage occurs within the cytoplasmic domain. Cleaved by a probable proprotein convertase which produces an extracellular domain (polyductin extracellular domain, (PECD)) and a C-terminal fragment (polyductin transmembrane fragment (PTM)) which are tethered together by disulfide bonds. This extracellular domain (PECD) is then shed from the primary cilium by activation of a member of the ADAM metalloproteinase disintegrins family, resulting in concomitant release of an intra-cellular C-terminal fragment (ICD) via a gamma-secretase-dependent process. The proteolytic cleavage of the C-terminal intracellular fragment (ICD) is controlled by cytosolic calcium concentration and activation of PKC.

Its subcellular location is the cell membrane. It localises to the cytoplasm. The protein resides in the apical cell membrane. It is found in the cytoskeleton. The protein localises to the cilium basal body. Its subcellular location is the cell projection. It localises to the cilium. The protein resides in the spindle. It is found in the chromosome. The protein localises to the centromere. Its subcellular location is the nucleus. It localises to the secreted. The protein resides in the extracellular exosome. It is found in the endoplasmic reticulum. The protein localises to the golgi apparatus. Its function is as follows. Promotes ciliogenesis in renal epithelial cells and therefore participates in the tubules formation and/ or ensures the maintenance of the architecture of the lumen of the kidney. Has an impact on cellular symmetry by ensuring correct bipolar cell division through the regulation of centrosome duplication and mitotic spindle assembly and by maintaining oriented cell division (OCD) during tubular elongation through planar cell polarity (PCP) pathway. During epithelial cell morphogenesis, it also regulates cell-cell and cell-matrix adhesion and participates in cell motility. Promotes cell-cell contact through the positive regulation of PTK2 kinase activity leading to either positive regulation of epithelial cell proliferation through the HRAS/RAF1 pathways, or negative regulation of apoptosis through the PDK1/AKT1 pathway. May act in collecting-duct and biliary differentiation. May participate in the regulation of the cholangiocytes proliferation and the CCN2 production in an CXCL8-dependent manner. The protein is Fibrocystin of Canis lupus familiaris (Dog).